Here is a 242-residue protein sequence, read N- to C-terminus: MTDQREEPQGSNDHLVRSSDPEHPANLIPELCKKFYTLGWVTGTGGGTSIRRDGHIFIAPSGVQKEMIKPEDIFVLSYPTPKYPPSARQYIRKPQELKPSACTPLFLAAFDRGAGCSIHTHSQWAVLVTLLVEREKGKNGCFEINNIEQIKGIPKGKGKGMLGFFDTLRIPIIENTAFEEDLTESLEKAMDEYPDTYAVLVRRHGIYVWGDTVAKAKTQCESLDYLFQLAVEMHKLGLPWVQ.

The tract at residues 1-23 (MTDQREEPQGSNDHLVRSSDPEH) is disordered. Cys102 contacts substrate. 2 residues coordinate Zn(2+): His119 and His121. Glu148 functions as the Proton donor/acceptor in the catalytic mechanism. His204 contacts Zn(2+).

The protein belongs to the aldolase class II family. MtnB subfamily. It depends on Zn(2+) as a cofactor.

The protein resides in the cytoplasm. It catalyses the reaction 5-(methylsulfanyl)-D-ribulose 1-phosphate = 5-methylsulfanyl-2,3-dioxopentyl phosphate + H2O. It participates in amino-acid biosynthesis; L-methionine biosynthesis via salvage pathway; L-methionine from S-methyl-5-thio-alpha-D-ribose 1-phosphate: step 2/6. Catalyzes the dehydration of methylthioribulose-1-phosphate (MTRu-1-P) into 2,3-diketo-5-methylthiopentyl-1-phosphate (DK-MTP-1-P). In Uncinocarpus reesii (strain UAMH 1704), this protein is Methylthioribulose-1-phosphate dehydratase.